We begin with the raw amino-acid sequence, 478 residues long: Quinoprotein glucose dehydrogenase B (478 aa).

Residues 1-24 (MNKHLLAKIALLSAVQLVTLSAFA) form the signal peptide. D-glucose contacts are provided by Gln100 and Asp167. His168 (proton acceptor) is an active-site residue. The D-glucose site is built by Gln192 and Arg252. The PQQ stretch occupies residues 252-253 (RN). Ca(2+) contacts are provided by Gly271, Pro272, Glu277, Tyr287, Ala293, Tyr295, Asp297, and Glu333. Pyrroloquinoline quinone contacts are provided by Tyr367, Thr372, and Lys401. Residues 430-432 (RYR) are PQQ.

It belongs to the PQQ oxidoreductase GdhB family. In terms of assembly, homodimer. It depends on pyrroloquinoline quinone as a cofactor. Ca(2+) serves as cofactor.

It catalyses the reaction a ubiquinone + D-glucose = D-glucono-1,5-lactone + a ubiquinol. In terms of biological role, oxidizes glucose to gluconolactone. This is Quinoprotein glucose dehydrogenase B (gdhB) from Acinetobacter calcoaceticus.